Here is a 570-residue protein sequence, read N- to C-terminus: Structure-specific endonuclease subunit EME1 (570 aa).

Over residues 1–12 (MALKKSSPSLDS) the composition is skewed to low complexity. The segment at 1–42 (MALKKSSPSLDSGDSDSEELPTFAFLKKEPSSTKRRQPEREE) is disordered. Residues S12 and S15 each carry the phosphoserine modification. A compositionally biased stretch (basic and acidic residues) spans 26-42 (LKKEPSSTKRRQPEREE). S84, S85, and S87 each carry phosphoserine. K103 is covalently cross-linked (Glycyl lysine isopeptide (Lys-Gly) (interchain with G-Cter in SUMO2)). S111 and S117 each carry phosphoserine. Glycyl lysine isopeptide (Lys-Gly) (interchain with G-Cter in SUMO2) cross-links involve residues K136 and K141. Phosphothreonine is present on T150. Disordered stretches follow at residues 187–233 (KTNS…ERKN) and 372–400 (AQNPPRRGKQGANKQTKKQQQRQPEASIG). Over residues 220-233 (RQKESTLRRQERKN) the composition is skewed to basic and acidic residues. The interval 250 to 456 (KHIIVVLDPV…PFKKLRDETT (207 aa)) is nuclease-like domain; forms the post-nick DNA binding interface and is involved in DNA recognition and bending. The helix-hairpin-helix (2HhH); forms the pre-nick DNA binding interface and is involved in DNA recognition and bending stretch occupies residues 476-570 (RGLALVWRRQ…QPHLSLDSAD (95 aa)).

It belongs to the EME1/MMS4 family. Part of the heterodimeric MUS81-EME1 complex.

It localises to the nucleus. The protein resides in the nucleolus. In terms of biological role, non-catalytic subunit of the structure-specific, heterodimeric DNA endonuclease MUS81-EME1 which is involved in the maintenance of genome stability. In the complex, EME1 is required for DNA cleavage, participating in DNA recognition and bending. MUS81-EME1 cleaves 3'-flaps and nicked Holliday junctions, and exhibit limited endonuclease activity with 5' flaps and nicked double-stranded DNAs. Active during prometaphase, MUS81-EME1 resolves mitotic recombination intermediates, including Holliday junctions, which form during homologous recombination. In Homo sapiens (Human), this protein is Structure-specific endonuclease subunit EME1.